The chain runs to 158 residues: Cyclic pyranopterin monophosphate synthase (158 aa).

Substrate-binding positions include 76 to 78 and 114 to 115; these read MCH and ME. Aspartate 129 is a catalytic residue.

This sequence belongs to the MoaC family. Homohexamer; trimer of dimers.

It carries out the reaction (8S)-3',8-cyclo-7,8-dihydroguanosine 5'-triphosphate = cyclic pyranopterin phosphate + diphosphate. Its pathway is cofactor biosynthesis; molybdopterin biosynthesis. Its function is as follows. Catalyzes the conversion of (8S)-3',8-cyclo-7,8-dihydroguanosine 5'-triphosphate to cyclic pyranopterin monophosphate (cPMP). This Clostridium perfringens (strain SM101 / Type A) protein is Cyclic pyranopterin monophosphate synthase.